A 558-amino-acid polypeptide reads, in one-letter code: Membrane protein insertase YidC (558 aa).

The next 5 helical transmembrane spans lie at 3-23 (IKRT…FDNW), 364-384 (FVGN…AVFF), 438-458 (LPVV…LASV), 477-497 (PYFI…KLNP), and 508-528 (MMFM…GLVL).

Belongs to the OXA1/ALB3/YidC family. Type 1 subfamily. Interacts with the Sec translocase complex via SecD. Specifically interacts with transmembrane segments of nascent integral membrane proteins during membrane integration.

It localises to the cell inner membrane. Functionally, required for the insertion and/or proper folding and/or complex formation of integral membrane proteins into the membrane. Involved in integration of membrane proteins that insert both dependently and independently of the Sec translocase complex, as well as at least some lipoproteins. Aids folding of multispanning membrane proteins. The polypeptide is Membrane protein insertase YidC (Burkholderia pseudomallei (strain 668)).